Here is a 137-residue protein sequence, read N- to C-terminus: Phosphatidylinositol N-acetylglucosaminyltransferase subunit P (137 aa).

Transmembrane regions (helical) follow at residues 16 to 36 (VYGF…LIWG) and 58 to 78 (MAMP…YIGL).

This sequence belongs to the PIGP family.

Its subcellular location is the membrane. It catalyses the reaction a 1,2-diacyl-sn-glycero-3-phospho-(1D-myo-inositol) + UDP-N-acetyl-alpha-D-glucosamine = a 6-(N-acetyl-alpha-D-glucosaminyl)-1-(1,2-diacyl-sn-glycero-3-phospho)-1D-myo-inositol + UDP + H(+). It functions in the pathway glycolipid biosynthesis; glycosylphosphatidylinositol-anchor biosynthesis. Part of the complex catalyzing the transfer of N-acetylglucosamine from UDP-N-acetylglucosamine to phosphatidylinositol, the first step of GPI biosynthesis. This Arabidopsis thaliana (Mouse-ear cress) protein is Phosphatidylinositol N-acetylglucosaminyltransferase subunit P.